The following is a 338-amino-acid chain: S-adenosylmethionine:tRNA ribosyltransferase-isomerase (338 aa).

It belongs to the QueA family. Monomer.

It is found in the cytoplasm. It catalyses the reaction 7-aminomethyl-7-carbaguanosine(34) in tRNA + S-adenosyl-L-methionine = epoxyqueuosine(34) in tRNA + adenine + L-methionine + 2 H(+). Its pathway is tRNA modification; tRNA-queuosine biosynthesis. In terms of biological role, transfers and isomerizes the ribose moiety from AdoMet to the 7-aminomethyl group of 7-deazaguanine (preQ1-tRNA) to give epoxyqueuosine (oQ-tRNA). The protein is S-adenosylmethionine:tRNA ribosyltransferase-isomerase of Francisella tularensis subsp. mediasiatica (strain FSC147).